Here is a 310-residue protein sequence, read N- to C-terminus: Glutaminase 1 (310 aa).

Substrate is bound by residues Ser66, Asn117, Glu161, Asn168, Tyr192, Tyr244, and Val262. The residue at position 294 (Lys294) is an N6-acetyllysine.

This sequence belongs to the glutaminase family. In terms of assembly, homotetramer.

It catalyses the reaction L-glutamine + H2O = L-glutamate + NH4(+). The sequence is that of Glutaminase 1 from Escherichia coli O157:H7.